We begin with the raw amino-acid sequence, 207 residues long: Guanylate kinase (207 aa).

Residues 4-184 enclose the Guanylate kinase-like domain; it reads GILFIISAPS…AVNDLITIIT (181 aa). Residue 11 to 18 participates in ATP binding; that stretch reads APSGTGKS.

Belongs to the guanylate kinase family.

It localises to the cytoplasm. It carries out the reaction GMP + ATP = GDP + ADP. Essential for recycling GMP and indirectly, cGMP. This is Guanylate kinase (gmk) from Buchnera aphidicola subsp. Acyrthosiphon pisum (strain APS) (Acyrthosiphon pisum symbiotic bacterium).